Reading from the N-terminus, the 431-residue chain is Enolase (431 aa).

Position 166 (Q166) interacts with (2R)-2-phosphoglycerate. The active-site Proton donor is E208. The Mg(2+) site is built by D245, E288, and D315. The (2R)-2-phosphoglycerate site is built by K340, R369, S370, and K391. The Proton acceptor role is filled by K340.

The protein belongs to the enolase family. The cofactor is Mg(2+).

Its subcellular location is the cytoplasm. It is found in the secreted. The protein resides in the cell surface. It catalyses the reaction (2R)-2-phosphoglycerate = phosphoenolpyruvate + H2O. It participates in carbohydrate degradation; glycolysis; pyruvate from D-glyceraldehyde 3-phosphate: step 4/5. Its function is as follows. Catalyzes the reversible conversion of 2-phosphoglycerate (2-PG) into phosphoenolpyruvate (PEP). It is essential for the degradation of carbohydrates via glycolysis. The protein is Enolase of Clostridium perfringens (strain 13 / Type A).